We begin with the raw amino-acid sequence, 957 residues long: Iron-responsive element-binding protein 2 (957 aa).

The [4Fe-4S] cluster site is built by Cys-506, Cys-572, and Cys-575.

Belongs to the aconitase/IPM isomerase family. [4Fe-4S] cluster is required as a cofactor. Ubiquitinated and degraded by the proteasome in presence of high level of iron and oxygen.

It localises to the cytoplasm. Its function is as follows. RNA-binding protein that binds to iron-responsive elements (IRES), which are stem-loop structures found in the 5'-UTR of ferritin, and delta aminolevulinic acid synthase mRNAs, and in the 3'-UTR of transferrin receptor mRNA. Binding to the IRE element in ferritin results in the repression of its mRNA translation. Binding of the protein to the transferrin receptor mRNA inhibits the degradation of this otherwise rapidly degraded mRNA. This Xenopus tropicalis (Western clawed frog) protein is Iron-responsive element-binding protein 2 (ireb2).